A 958-amino-acid chain; its full sequence is Translation initiation factor IF-2 (958 aa).

Disordered regions lie at residues 67 to 95 and 111 to 355; these read APAA…APAP and PAPA…VPRG. Over residues 75-95 the composition is skewed to pro residues; sequence APAPGPAAPKAPAPAPAAPAP. The span at 140–161 shows a compositional bias: low complexity; sequence PAPARQGGQAPRPGGPRPGNNP. Over residues 195-206 the composition is skewed to basic and acidic residues; the sequence is RGERRNDGERPG. Over residues 209–221 the composition is skewed to low complexity; that stretch reads RPAAGAGGPRPAA. A compositionally biased stretch (pro residues) spans 228-241; the sequence is PGAPRPGAPRPGAP. The segment covering 268-325 has biased composition (gly residues); it reads GGAGRPGGAGRPGGGPGRPGGAPGAGTGGGAPAGGGFGKGGRGRGGTQGAFGKGGAGR. Positions 326 to 335 are enriched in basic residues; the sequence is GKQRKSKRAK. The tr-type G domain maps to 450 to 621; it reads ARAPVVTVMG…AVLLTADAAL (172 aa). The interval 459 to 466 is G1; that stretch reads GHVDHGKT. 459–466 provides a ligand contact to GTP; the sequence is GHVDHGKT. The G2 stretch occupies residues 484-488; the sequence is GITQH. The interval 509-512 is G3; that stretch reads DTPG. Residues 509–513 and 563–566 contribute to the GTP site; these read DTPGH and NKID. A G4 region spans residues 563-566; sequence NKID. A G5 region spans residues 599–601; that stretch reads SAR.

Belongs to the TRAFAC class translation factor GTPase superfamily. Classic translation factor GTPase family. IF-2 subfamily.

Its subcellular location is the cytoplasm. Functionally, one of the essential components for the initiation of protein synthesis. Protects formylmethionyl-tRNA from spontaneous hydrolysis and promotes its binding to the 30S ribosomal subunits. Also involved in the hydrolysis of GTP during the formation of the 70S ribosomal complex. The sequence is that of Translation initiation factor IF-2 from Paenarthrobacter aurescens (strain TC1).